The chain runs to 1075 residues: DNA-directed RNA polymerase subunit beta (1075 aa).

Belongs to the RNA polymerase beta chain family. In terms of assembly, in plastids the minimal PEP RNA polymerase catalytic core is composed of four subunits: alpha, beta, beta', and beta''. When a (nuclear-encoded) sigma factor is associated with the core the holoenzyme is formed, which can initiate transcription.

The protein localises to the plastid. It is found in the chloroplast. It carries out the reaction RNA(n) + a ribonucleoside 5'-triphosphate = RNA(n+1) + diphosphate. Functionally, DNA-dependent RNA polymerase catalyzes the transcription of DNA into RNA using the four ribonucleoside triphosphates as substrates. The chain is DNA-directed RNA polymerase subunit beta from Pinus thunbergii (Japanese black pine).